The sequence spans 148 residues: SPbeta prophage-derived disulfide bond formation protein B (148 aa).

Residues 7–26 (KSFFLLLFFLSFFGTMASLF) form a helical membrane-spanning segment. Cysteine 36 and cysteine 39 are oxidised to a cystine. Transmembrane regions (helical) follow at residues 41-60 (YQRIFLYPIPIILLIGLLKK) and 67-84 (YVVFLSSIGLIIAFYHYI). Cysteine 95 and cysteine 102 are disulfide-bonded. Residues 111–135 (GFITLPLMSSVCFALIFGIGLKLII) form a helical membrane-spanning segment.

The protein belongs to the DsbB family. BdbC subfamily.

It localises to the cell membrane. Important but not absolutely essential for the production of the lantibiotic sublancin 168, it may also be required for the stability of other secreted proteins. Not required for competence for DNA uptake. In Bacillus subtilis (strain 168), this protein is SPbeta prophage-derived disulfide bond formation protein B (bdbB).